Consider the following 188-residue polypeptide: Elongation factor P (188 aa).

The protein belongs to the elongation factor P family.

The protein resides in the cytoplasm. It participates in protein biosynthesis; polypeptide chain elongation. In terms of biological role, involved in peptide bond synthesis. Stimulates efficient translation and peptide-bond synthesis on native or reconstituted 70S ribosomes in vitro. Probably functions indirectly by altering the affinity of the ribosome for aminoacyl-tRNA, thus increasing their reactivity as acceptors for peptidyl transferase. This Bradyrhizobium diazoefficiens (strain JCM 10833 / BCRC 13528 / IAM 13628 / NBRC 14792 / USDA 110) protein is Elongation factor P.